Reading from the N-terminus, the 151-residue chain is Probable chemoreceptor glutamine deamidase CheD (151 aa).

The protein belongs to the CheD family.

It catalyses the reaction L-glutaminyl-[protein] + H2O = L-glutamyl-[protein] + NH4(+). Functionally, probably deamidates glutamine residues to glutamate on methyl-accepting chemotaxis receptors (MCPs), playing an important role in chemotaxis. The chain is Probable chemoreceptor glutamine deamidase CheD from Methanosarcina barkeri (strain Fusaro / DSM 804).